Here is a 394-residue protein sequence, read N- to C-terminus: Actin-related protein 2 (394 aa).

Met1 carries the post-translational modification N-acetylmethionine. ATP is bound by residues 160-162 and 214-218; these read GDG and RMIKE. Lys299 carries the post-translational modification N6-acetyllysine. 305 to 310 is a binding site for ATP; sequence GGSTMY. An N6-acetyllysine modification is found at Lys322.

This sequence belongs to the actin family. ARP2 subfamily. As to quaternary structure, component of the Arp2/3 complex composed of ACTR2/ARP2, ACTR3/ARP3, ARPC1B/p41-ARC, ARPC2/p34-ARC, ARPC3/p21-ARC, ARPC4/p20-ARC and ARPC5/p16-ARC. Interacts with AVIL.

Its subcellular location is the cytoplasm. The protein localises to the cytoskeleton. It localises to the cell projection. The protein resides in the nucleus. ATP-binding component of the Arp2/3 complex, a multiprotein complex that mediates actin polymerization upon stimulation by nucleation-promoting factor (NPF). The Arp2/3 complex mediates the formation of branched actin networks in the cytoplasm, providing the force for cell motility. Seems to contact the pointed end of the daughter actin filament. In podocytes, required for the formation of lamellipodia downstream of AVIL and PLCE1 regulation. In addition to its role in the cytoplasmic cytoskeleton, the Arp2/3 complex also promotes actin polymerization in the nucleus, thereby regulating gene transcription and repair of damaged DNA. The Arp2/3 complex promotes homologous recombination (HR) repair in response to DNA damage by promoting nuclear actin polymerization, leading to drive motility of double-strand breaks (DSBs). The chain is Actin-related protein 2 (ACTR2) from Pongo abelii (Sumatran orangutan).